Here is a 169-residue protein sequence, read N- to C-terminus: Crossover junction endodeoxyribonuclease RuvC (169 aa).

Active-site residues include Asp13, Glu73, and Asp145. Residues Asp13, Glu73, and Asp145 each contribute to the Mg(2+) site.

This sequence belongs to the RuvC family. As to quaternary structure, homodimer which binds Holliday junction (HJ) DNA. The HJ becomes 2-fold symmetrical on binding to RuvC with unstacked arms; it has a different conformation from HJ DNA in complex with RuvA. In the full resolvosome a probable DNA-RuvA(4)-RuvB(12)-RuvC(2) complex forms which resolves the HJ. The cofactor is Mg(2+).

Its subcellular location is the cytoplasm. It catalyses the reaction Endonucleolytic cleavage at a junction such as a reciprocal single-stranded crossover between two homologous DNA duplexes (Holliday junction).. Its function is as follows. The RuvA-RuvB-RuvC complex processes Holliday junction (HJ) DNA during genetic recombination and DNA repair. Endonuclease that resolves HJ intermediates. Cleaves cruciform DNA by making single-stranded nicks across the HJ at symmetrical positions within the homologous arms, yielding a 5'-phosphate and a 3'-hydroxyl group; requires a central core of homology in the junction. The consensus cleavage sequence is 5'-(A/T)TT(C/G)-3'. Cleavage occurs on the 3'-side of the TT dinucleotide at the point of strand exchange. HJ branch migration catalyzed by RuvA-RuvB allows RuvC to scan DNA until it finds its consensus sequence, where it cleaves and resolves the cruciform DNA. This Solidesulfovibrio magneticus (strain ATCC 700980 / DSM 13731 / RS-1) (Desulfovibrio magneticus) protein is Crossover junction endodeoxyribonuclease RuvC.